Here is a 504-residue protein sequence, read N- to C-terminus: Xanthotoxol synthase (504 aa).

The helical transmembrane segment at Pro3–His23 threads the bilayer. Positions Pro363–Ile368 are substrate specificity. Residue Cys444 participates in heme binding.

It belongs to the cytochrome P450 family. It depends on heme as a cofactor.

Its subcellular location is the microsome membrane. It catalyses the reaction psoralen + reduced [NADPH--hemoprotein reductase] + O2 = xanthotoxol + oxidized [NADPH--hemoprotein reductase] + H2O + H(+). It carries out the reaction 6-methoxycoumarin + reduced [NADPH--hemoprotein reductase] + O2 = scopoletin + oxidized [NADPH--hemoprotein reductase] + H2O + H(+). It functions in the pathway secondary metabolite biosynthesis. Functionally, involved in the biosynthesis of coumarins and furanocoumarins (FCs), natural products required for defense responses against attacks by predators with potential medical and agroindustrial usages such as anticoagulant, rodenticide and artificial vanilla substitutes. Catalyzes the conversion of psoralen into xanthotoxol and of 6-methoxycoumarin into scopoletin. Can also convert with a lower efficiency scopoletin into fraxetin and 7-methoxycoumarin into daphnetin-7-methylether, and use 7-methoxy-3-methylcoumarin as substrate. In Pastinaca sativa (Wild parsnip), this protein is Xanthotoxol synthase.